The following is a 434-amino-acid chain: Glutamate-1-semialdehyde 2,1-aminomutase (434 aa).

Lys-267 is subject to N6-(pyridoxal phosphate)lysine.

The protein belongs to the class-III pyridoxal-phosphate-dependent aminotransferase family. HemL subfamily. As to quaternary structure, homodimer. It depends on pyridoxal 5'-phosphate as a cofactor.

The protein resides in the cytoplasm. The enzyme catalyses (S)-4-amino-5-oxopentanoate = 5-aminolevulinate. It participates in porphyrin-containing compound metabolism; protoporphyrin-IX biosynthesis; 5-aminolevulinate from L-glutamyl-tRNA(Glu): step 2/2. Its pathway is porphyrin-containing compound metabolism; chlorophyll biosynthesis. This is Glutamate-1-semialdehyde 2,1-aminomutase from Roseiflexus castenholzii (strain DSM 13941 / HLO8).